Consider the following 215-residue polypeptide: Hibernation-associated plasma protein HP-25 (215 aa).

The signal sequence occupies residues 1 to 28 (MPAQRGGALSMGAAGFWILVLSITSALA). Residues 29–96 (DSNNQGNSEP…RPKSAFAVKL (68 aa)) are disordered. Composition is skewed to pro residues over residues 39–51 (CGPPGPPGPPGIP) and 60–77 (LGPPGPPGVPGIPGPQGP). One can recognise a Collagen-like domain in the interval 40-81 (GPPGPPGPPGIPGFPGAPGALGPPGPPGVPGIPGPQGPPGDV). In terms of domain architecture, C1q spans 85-215 (SSRPKSAFAV…VFFGYLLYGK (131 aa)). A glycan (N-linked (GlcNAc...) asparagine) is linked at Asn-167.

Plasma; synthesized in the liver.

The protein resides in the secreted. Its function is as follows. Plasma proteins HP-20, HP-25, HP-27 and HP-55 form a 140 kDa complex via disulfide bonds in the plasma and are hibernation specific. The polypeptide is Hibernation-associated plasma protein HP-25 (Tamias sibiricus (Siberian chipmunk)).